A 275-amino-acid chain; its full sequence is Large ribosomal subunit protein uL2 (275 aa).

The disordered stretch occupies residues 227 to 261 (PVDHPHGGGEAKSGQGNPHPVTPWGVPTKGYKTRK).

It belongs to the universal ribosomal protein uL2 family. Part of the 50S ribosomal subunit. Forms a bridge to the 30S subunit in the 70S ribosome.

Its function is as follows. One of the primary rRNA binding proteins. Required for association of the 30S and 50S subunits to form the 70S ribosome, for tRNA binding and peptide bond formation. It has been suggested to have peptidyltransferase activity; this is somewhat controversial. Makes several contacts with the 16S rRNA in the 70S ribosome. This Xylella fastidiosa (strain M23) protein is Large ribosomal subunit protein uL2.